We begin with the raw amino-acid sequence, 158 residues long: Flagellar assembly factor FliW (158 aa).

The protein belongs to the FliW family. Interacts with translational regulator CsrA and flagellin(s).

It localises to the cytoplasm. In terms of biological role, acts as an anti-CsrA protein, binds CsrA and prevents it from repressing translation of its target genes, one of which is flagellin. Binds to flagellin and participates in the assembly of the flagellum. The sequence is that of Flagellar assembly factor FliW from Syntrophus aciditrophicus (strain SB).